A 408-amino-acid polypeptide reads, in one-letter code: Serine/threonine transporter SstT (408 aa).

The next 9 helical transmembrane spans lie at 11-31 (LANG…VSLA), 43-63 (FLGS…VFIL), 82-102 (IVVL…LLSM), 141-161 (ALMT…GLAL), 192-212 (IGIF…AIAG), 216-236 (LLAV…PLIV), 298-318 (MGGA…TLGI), 339-359 (ASGV…LFGI), and 363-383 (VAMQ…AAET).

It belongs to the dicarboxylate/amino acid:cation symporter (DAACS) (TC 2.A.23) family.

Its subcellular location is the cell inner membrane. The enzyme catalyses L-serine(in) + Na(+)(in) = L-serine(out) + Na(+)(out). It carries out the reaction L-threonine(in) + Na(+)(in) = L-threonine(out) + Na(+)(out). In terms of biological role, involved in the import of serine and threonine into the cell, with the concomitant import of sodium (symport system). The polypeptide is Serine/threonine transporter SstT (Shewanella sp. (strain MR-7)).